Consider the following 516-residue polypeptide: uncharacterized protein (516 aa).

The first 17 residues, 1 to 17 (MSVWVALALLGMCVSCT), serve as a signal peptide directing secretion. 2 disordered regions span residues 29-197 (KEPP…EVPR) and 296-426 (RTVS…RDHL). A compositionally biased stretch (basic and acidic residues) spans 71–85 (RVPESSQEREQKPES). The segment covering 122–144 (VAPPAPPAPTAPRPHRPSPPPVS) has biased composition (pro residues). Over residues 145-155 (PSASKPKQRAV) the composition is skewed to low complexity. A compositionally biased stretch (basic and acidic residues) spans 351–367 (KAQHGTPRPDEKKDREP). Low complexity predominate over residues 394–406 (SPASQPSAPSAAP). Basic and acidic residues predominate over residues 415 to 426 (AHKEGQEKRDHL).

This is an uncharacterized protein from Treponema pallidum (strain Nichols).